The chain runs to 756 residues: Ribosomal RNA large subunit methyltransferase K/L (756 aa).

The THUMP domain maps to 46-157; sequence TAYRLCLWSR…RGEAILSLDL (112 aa). Basic and acidic residues predominate over residues 395–409; it reads ERRTPEQRQAEREQA. The interval 395–441 is disordered; it reads ERRTPEQRQAEREQAAYDQTPNEPQERKFNKNGNPIKPTPAPAPVIE.

This sequence belongs to the methyltransferase superfamily. RlmKL family.

The protein localises to the cytoplasm. The catalysed reaction is guanosine(2445) in 23S rRNA + S-adenosyl-L-methionine = N(2)-methylguanosine(2445) in 23S rRNA + S-adenosyl-L-homocysteine + H(+). It carries out the reaction guanosine(2069) in 23S rRNA + S-adenosyl-L-methionine = N(2)-methylguanosine(2069) in 23S rRNA + S-adenosyl-L-homocysteine + H(+). Specifically methylates the guanine in position 2445 (m2G2445) and the guanine in position 2069 (m7G2069) of 23S rRNA. This chain is Ribosomal RNA large subunit methyltransferase K/L, found in Pseudomonas fluorescens (strain Pf0-1).